The following is a 97-amino-acid chain: uncharacterized protein (97 aa).

The signal sequence occupies residues 1–21; the sequence is MNKKFSISLLSTILAFLLVLG. A lipid anchor (N-palmitoyl cysteine) is attached at Cys-22. The S-diacylglycerol cysteine moiety is linked to residue Cys-22.

This sequence to B.burgdorferi BBD15.

It localises to the cell membrane. This is an uncharacterized protein from Borreliella burgdorferi (strain ATCC 35210 / DSM 4680 / CIP 102532 / B31) (Borrelia burgdorferi).